Here is a 329-residue protein sequence, read N- to C-terminus: DNA-directed RNA polymerase subunit alpha (329 aa).

Positions 1-235 are alpha N-terminal domain (alpha-NTD); it reads MLGSVTDFLK…EQLDAFVDLR (235 aa). The alpha C-terminal domain (alpha-CTD) stretch occupies residues 249–329; the sequence is FDPILLRPVD…NWPPASLADN (81 aa).

Belongs to the RNA polymerase alpha chain family. As to quaternary structure, homodimer. The RNAP catalytic core consists of 2 alpha, 1 beta, 1 beta' and 1 omega subunit. When a sigma factor is associated with the core the holoenzyme is formed, which can initiate transcription.

It catalyses the reaction RNA(n) + a ribonucleoside 5'-triphosphate = RNA(n+1) + diphosphate. DNA-dependent RNA polymerase catalyzes the transcription of DNA into RNA using the four ribonucleoside triphosphates as substrates. The sequence is that of DNA-directed RNA polymerase subunit alpha from Tolumonas auensis (strain DSM 9187 / NBRC 110442 / TA 4).